Consider the following 177-residue polypeptide: MSRVAKAPVNIPAGVEVKLDGQLLTVKGKNGELSRKIHESVEVKQDNGQFTFTPREGFVEANAQSGTARALVNAMVIGVTEGFTKKLVLVGVGYRAQLKGNAIALSLGYSHPVEHTLPVGITAECPSQTEIVLKGADKQLIGQVAADIRAYRRPEPYKGKGVRYADEVVRIKEAKKK.

It belongs to the universal ribosomal protein uL6 family. In terms of assembly, part of the 50S ribosomal subunit.

Its function is as follows. This protein binds to the 23S rRNA, and is important in its secondary structure. It is located near the subunit interface in the base of the L7/L12 stalk, and near the tRNA binding site of the peptidyltransferase center. This chain is Large ribosomal subunit protein uL6, found in Haemophilus influenzae (strain 86-028NP).